The primary structure comprises 87 residues: MAQAQIDEQRRLQDLYVQLKKEINDGEGVAWLFQQKTYTDKDNKPTKATPPLRTTSSDLRLCDCNKQHQHNQSNCWMCGNKRSRRAT.

Its subcellular location is the host nucleus. Functionally, plays a role in viral DNA replication. The sequence is that of Non-structural protein NS3 from Mustela (ADV).